The sequence spans 460 residues: Mitochondrial distribution and morphology protein 34 (460 aa).

In terms of domain architecture, SMP-LTD spans 1 to 196 (MSFKFDWESL…LPGIIHRLSQ (196 aa)). Basic residues predominate over residues 304-321 (HNHQAPKRRTIKYKRKSK). Disordered stretches follow at residues 304–356 (HNHQ…PSRE) and 368–460 (EPSS…AYSG). Composition is skewed to low complexity over residues 330–355 (STEV…TPSR) and 393–405 (SPPS…DTSL).

This sequence belongs to the MDM34 family. Component of the ER-mitochondria encounter structure (ERMES) or MDM complex, composed of MMM1, MDM10, MDM12 and MDM34.

It is found in the mitochondrion outer membrane. Functionally, component of the ERMES/MDM complex, which serves as a molecular tether to connect the endoplasmic reticulum (ER) and mitochondria. Components of this complex are involved in the control of mitochondrial shape and protein biogenesis, and function in nonvesicular lipid trafficking between the ER and mitochondria. MDM34 is required for the interaction of the ER-resident membrane protein MMM1 and the outer mitochondrial membrane-resident beta-barrel protein MDM10. In Yarrowia lipolytica (strain CLIB 122 / E 150) (Yeast), this protein is Mitochondrial distribution and morphology protein 34.